The chain runs to 93 residues: UPF0521 protein B (93 aa).

A coiled-coil region spans residues 2–58; the sequence is SLKEVITSLKNDFHSINKEIDSMKENNEKQEEKIFQEIKKLKLEMELLRKDNLSFKT.

This sequence belongs to the UPF0521 family.

The polypeptide is UPF0521 protein B (Dictyostelium discoideum (Social amoeba)).